A 232-amino-acid chain; its full sequence is E3 ubiquitin-protein ligase RNF125 (232 aa).

The segment covering 1 to 10 has biased composition (polar residues); it reads MGSVLSTDSG. The disordered stretch occupies residues 1–23; it reads MGSVLSTDSGKSAPASATARALE. Gly2 carries the N-myristoyl glycine lipid modification. The Zn(2+) site is built by Cys37 and Cys40. The segment at 37-76 adopts an RING-type zinc-finger fold; the sequence is CAVCLEVLHQPVRTRCGHVFCRSCIATSLKNNKWTCPYCR. The tract at residues 43–45 is interaction with the C2HC RNF-type zinc finger; sequence VLH. Zn(2+) is bound by residues Cys52, His54, Cys57, Cys60, Cys72, Cys75, Cys100, and Cys103. Residues 100–119 form a C2HC RNF-type zinc finger; the sequence is CAECDTLVCLSEMRAHIRTC. The segment at 109-113 is interaction with the RING-type zinc finger; sequence LSEMR. Residues His115 and Cys119 each coordinate Zn(2+). Residues 120–128 are linker region; the sequence is QKYIDKYGP. Residues 210–224 form a required for interaction with ubiquitin and for autoubiquitination region; it reads EEALIRRVLDRSLLE.

As to quaternary structure, interacts with UBE2D1. Interacts with VCP/p97; leading to recruit RNF125 to RIGI and promote ubiquitination of RIGI. Autoubiquitinated, leading to its subsequent proteasomal degradation. As to expression, predominantly expressed in lymphoid tissues, including bone marrow, spleen and thymus. Also weakly expressed in other tissues. Predominant in the CD4(+) and CD8(+) T-cells, suggesting that it is preferentially confined to T-cells.

It localises to the golgi apparatus membrane. The catalysed reaction is S-ubiquitinyl-[E2 ubiquitin-conjugating enzyme]-L-cysteine + [acceptor protein]-L-lysine = [E2 ubiquitin-conjugating enzyme]-L-cysteine + N(6)-ubiquitinyl-[acceptor protein]-L-lysine.. The protein operates within protein modification; protein ubiquitination. Functionally, E3 ubiquitin-protein ligase that mediates ubiquitination and subsequent proteasomal degradation of target proteins, such as RIGI, MAVS/IPS1, IFIH1/MDA5, JAK1 and p53/TP53. Acts as a negative regulator of type I interferon production by mediating ubiquitination of RIGI at 'Lys-181', leading to RIGI degradation. Mediates ubiquitination and subsequent degradation of p53/TP53. Mediates ubiquitination and subsequent degradation of JAK1. Acts as a positive regulator of T-cell activation. This chain is E3 ubiquitin-protein ligase RNF125, found in Homo sapiens (Human).